The sequence spans 356 residues: Ferrochelatase (356 aa).

2 residues coordinate Fe cation: histidine 214 and glutamate 295.

Belongs to the ferrochelatase family.

The protein resides in the cytoplasm. The catalysed reaction is heme b + 2 H(+) = protoporphyrin IX + Fe(2+). It functions in the pathway porphyrin-containing compound metabolism; protoheme biosynthesis; protoheme from protoporphyrin-IX: step 1/1. Catalyzes the ferrous insertion into protoporphyrin IX. This is Ferrochelatase from Paraburkholderia phytofirmans (strain DSM 17436 / LMG 22146 / PsJN) (Burkholderia phytofirmans).